The primary structure comprises 421 residues: Gamma-glutamyl phosphate reductase (421 aa).

It belongs to the gamma-glutamyl phosphate reductase family.

Its subcellular location is the cytoplasm. The enzyme catalyses L-glutamate 5-semialdehyde + phosphate + NADP(+) = L-glutamyl 5-phosphate + NADPH + H(+). The protein operates within amino-acid biosynthesis; L-proline biosynthesis; L-glutamate 5-semialdehyde from L-glutamate: step 2/2. In terms of biological role, catalyzes the NADPH-dependent reduction of L-glutamate 5-phosphate into L-glutamate 5-semialdehyde and phosphate. The product spontaneously undergoes cyclization to form 1-pyrroline-5-carboxylate. This is Gamma-glutamyl phosphate reductase from Stutzerimonas stutzeri (strain A1501) (Pseudomonas stutzeri).